The following is a 207-amino-acid chain: Ribosomal RNA small subunit methyltransferase G (207 aa).

S-adenosyl-L-methionine-binding positions include G74, L79, V125–E126, and R140.

It belongs to the methyltransferase superfamily. RNA methyltransferase RsmG family.

Its subcellular location is the cytoplasm. The enzyme catalyses guanosine(527) in 16S rRNA + S-adenosyl-L-methionine = N(7)-methylguanosine(527) in 16S rRNA + S-adenosyl-L-homocysteine. Functionally, specifically methylates the N7 position of guanine in position 527 of 16S rRNA. The chain is Ribosomal RNA small subunit methyltransferase G from Shewanella piezotolerans (strain WP3 / JCM 13877).